Consider the following 267-residue polypeptide: Eukaryotic translation initiation factor 3 subunit J (267 aa).

Disordered regions lie at residues 1–118 (MAPS…DLKH) and 221–241 (MREERAADKGNKKTKAAKTKV). Over residues 28-46 (DEEEEDVLDSWDAAEDSEV) the composition is skewed to acidic residues. A coiled-coil region spans residues 44 to 99 (SEVEREKAAKAAAAAAKAEAEAAAKKKSKAQRIEERKQERKKLAEANESDEDSEED). Basic and acidic residues predominate over residues 74-88 (QRIEERKQERKKLAE). The segment covering 90 to 100 (NESDEDSEEDE) has biased composition (acidic residues). 2 stretches are compositionally biased toward basic and acidic residues: residues 108–118 (RRTEKEGDLKH) and 221–231 (MREERAADKGN).

This sequence belongs to the eIF-3 subunit J family. In terms of assembly, component of the eukaryotic translation initiation factor 3 (eIF-3) complex.

It localises to the cytoplasm. Component of the eukaryotic translation initiation factor 3 (eIF-3) complex, which is involved in protein synthesis of a specialized repertoire of mRNAs and, together with other initiation factors, stimulates binding of mRNA and methionyl-tRNAi to the 40S ribosome. The eIF-3 complex specifically targets and initiates translation of a subset of mRNAs involved in cell proliferation. In Aspergillus fumigatus (strain CBS 144.89 / FGSC A1163 / CEA10) (Neosartorya fumigata), this protein is Eukaryotic translation initiation factor 3 subunit J (hcr1).